We begin with the raw amino-acid sequence, 397 residues long: Ribosomal RNA large subunit methyltransferase I (397 aa).

The region spanning 2–80 is the PUA domain; the sequence is AIRIKLKPGR…KEEAIDADFF (79 aa).

The protein belongs to the methyltransferase superfamily. RlmI family.

The protein resides in the cytoplasm. It carries out the reaction cytidine(1962) in 23S rRNA + S-adenosyl-L-methionine = 5-methylcytidine(1962) in 23S rRNA + S-adenosyl-L-homocysteine + H(+). Specifically methylates the cytosine at position 1962 (m5C1962) of 23S rRNA. The chain is Ribosomal RNA large subunit methyltransferase I from Shewanella denitrificans (strain OS217 / ATCC BAA-1090 / DSM 15013).